Here is a 711-residue protein sequence, read N- to C-terminus: Ribosomal RNA large subunit methyltransferase K/L (711 aa).

Residues 42–153 (DAQRAVLWSR…KGRATISVDL (112 aa)) enclose the THUMP domain.

It belongs to the methyltransferase superfamily. RlmKL family.

The protein resides in the cytoplasm. It carries out the reaction guanosine(2445) in 23S rRNA + S-adenosyl-L-methionine = N(2)-methylguanosine(2445) in 23S rRNA + S-adenosyl-L-homocysteine + H(+). It catalyses the reaction guanosine(2069) in 23S rRNA + S-adenosyl-L-methionine = N(2)-methylguanosine(2069) in 23S rRNA + S-adenosyl-L-homocysteine + H(+). Its function is as follows. Specifically methylates the guanine in position 2445 (m2G2445) and the guanine in position 2069 (m7G2069) of 23S rRNA. In Xanthomonas oryzae pv. oryzae (strain KACC10331 / KXO85), this protein is Ribosomal RNA large subunit methyltransferase K/L.